The primary structure comprises 80 residues: Trefoil factor 3 (80 aa).

The first 21 residues, 1–21 (MEARVLWLLALVLALGSSSLA), serve as a signal peptide directing secretion. The 44-residue stretch at 30–73 (NLCAVPAKNRVDCGYPEISPEQCVNRGCCFDSSIPEVPWCFKPL) folds into the P-type domain. 3 disulfide bridges follow: Cys32–Cys58, Cys42–Cys57, and Cys52–Cys69.

In terms of assembly, monomer. Homodimer; disulfide-linked.

Its subcellular location is the secreted. It is found in the extracellular space. The protein resides in the extracellular matrix. It localises to the cytoplasm. In terms of biological role, involved in the maintenance and repair of the intestinal mucosa. Promotes the mobility of epithelial cells in healing processes (motogen). The sequence is that of Trefoil factor 3 (TFF3) from Felis catus (Cat).